Here is a 228-residue protein sequence, read N- to C-terminus: Lipoprotein-releasing system ATP-binding protein LolD (228 aa).

The ABC transporter domain occupies 6–228; sequence IKCLNVVKGY…EAGVLNKQGQ (223 aa). An ATP-binding site is contributed by 42-49; sequence GASGSGKS.

This sequence belongs to the ABC transporter superfamily. Lipoprotein translocase (TC 3.A.1.125) family. In terms of assembly, the complex is composed of two ATP-binding proteins (LolD) and two transmembrane proteins (LolC and LolE).

It localises to the cell inner membrane. Functionally, part of the ABC transporter complex LolCDE involved in the translocation of mature outer membrane-directed lipoproteins, from the inner membrane to the periplasmic chaperone, LolA. Responsible for the formation of the LolA-lipoprotein complex in an ATP-dependent manner. This is Lipoprotein-releasing system ATP-binding protein LolD from Saccharophagus degradans (strain 2-40 / ATCC 43961 / DSM 17024).